We begin with the raw amino-acid sequence, 344 residues long: Anthranilate phosphoribosyltransferase (344 aa).

5-phospho-alpha-D-ribose 1-diphosphate is bound by residues Gly-80, Gly-83–Asp-84, Thr-88, Asn-90–Thr-93, Lys-108–Ser-116, and Ser-120. Residue Gly-80 participates in anthranilate binding. Ser-92 is a Mg(2+) binding site. Asn-111 is a binding site for anthranilate. Arg-166 contacts anthranilate. Mg(2+)-binding residues include Asp-225 and Glu-226.

This sequence belongs to the anthranilate phosphoribosyltransferase family. Homodimer. Requires Mg(2+) as cofactor.

It carries out the reaction N-(5-phospho-beta-D-ribosyl)anthranilate + diphosphate = 5-phospho-alpha-D-ribose 1-diphosphate + anthranilate. Its pathway is amino-acid biosynthesis; L-tryptophan biosynthesis; L-tryptophan from chorismate: step 2/5. Its function is as follows. Catalyzes the transfer of the phosphoribosyl group of 5-phosphorylribose-1-pyrophosphate (PRPP) to anthranilate to yield N-(5'-phosphoribosyl)-anthranilate (PRA). In Legionella pneumophila (strain Paris), this protein is Anthranilate phosphoribosyltransferase.